The sequence spans 153 residues: Pheromone-binding protein Gp-9 (153 aa).

The first 19 residues, 1–19, serve as a signal peptide directing secretion; the sequence is MKTFVLHIFIFALVAFASA. Intrachain disulfides connect cysteine 37–cysteine 77, cysteine 73–cysteine 129, and cysteine 118–cysteine 138.

This sequence belongs to the PBP/GOBP family. In terms of assembly, homodimer.

It localises to the secreted. Functionally, colony queen number, a major feature of social organization, is associated with worker genotype for Gp-9. Colonies are headed by either a single reproductive queen (monogyne form) or multiple queens (polygyne form). Differences in worker Gp-9 genotypes between social forms may cause differences in workers' abilities to recognize queens and regulate their numbers. The polypeptide is Pheromone-binding protein Gp-9 (Solenopsis sp. (strain B0-153) (Fire ant)).